We begin with the raw amino-acid sequence, 242 residues long: MGWQRPDGRQPQELRSHQFQRHFTQFALGSVLAQAGQTQVLCTVSFKEGVPKFLEGTGQGWLTAEYRMLPSATRPRQEREFLKLSGRTQEIQRLIGRSLRSAVDLSLLGECTLIVDADVLQADAGTRSLAITGGYIALVDALSALLQQGVLRKSPLRHQVAAVSVGLIDDEPYLDLSYAEDVAASVDFNVVMTGSGQFIEVQGTAEMGSFDRGTLDRLLDVARQGIQELIEIQQRVLAPSHE.

Residues Arg87 and 125-127 (GTR) contribute to the phosphate site.

The protein belongs to the RNase PH family. Homohexameric ring arranged as a trimer of dimers.

It catalyses the reaction tRNA(n+1) + phosphate = tRNA(n) + a ribonucleoside 5'-diphosphate. Functionally, phosphorolytic 3'-5' exoribonuclease that plays an important role in tRNA 3'-end maturation. Removes nucleotide residues following the 3'-CCA terminus of tRNAs; can also add nucleotides to the ends of RNA molecules by using nucleoside diphosphates as substrates, but this may not be physiologically important. Probably plays a role in initiation of 16S rRNA degradation (leading to ribosome degradation) during starvation. In Thermosynechococcus vestitus (strain NIES-2133 / IAM M-273 / BP-1), this protein is Ribonuclease PH.